The following is a 454-amino-acid chain: tRNA modification GTPase MnmE (454 aa).

(6S)-5-formyl-5,6,7,8-tetrahydrofolate-binding residues include Arg-23, Glu-80, and Lys-120. A TrmE-type G domain is found at 216–377 (GMKVVIAGRP…LRDHLKQSMG (162 aa)). Residue Asn-226 coordinates K(+). Residues 226–231 (NAGKSS), 245–251 (TDIAGTT), 270–273 (DTAG), 335–338 (NKAD), and 358–360 (SAR) contribute to the GTP site. Residue Ser-230 coordinates Mg(2+). K(+)-binding residues include Thr-245, Ile-247, and Thr-250. Thr-251 contacts Mg(2+). Lys-454 lines the (6S)-5-formyl-5,6,7,8-tetrahydrofolate pocket.

Belongs to the TRAFAC class TrmE-Era-EngA-EngB-Septin-like GTPase superfamily. TrmE GTPase family. In terms of assembly, homodimer. Heterotetramer of two MnmE and two MnmG subunits. It depends on K(+) as a cofactor.

It is found in the cytoplasm. Its function is as follows. Exhibits a very high intrinsic GTPase hydrolysis rate. Involved in the addition of a carboxymethylaminomethyl (cmnm) group at the wobble position (U34) of certain tRNAs, forming tRNA-cmnm(5)s(2)U34. The protein is tRNA modification GTPase MnmE of Yersinia pseudotuberculosis serotype O:3 (strain YPIII).